The primary structure comprises 799 residues: ATP synthase subunit alpha (799 aa).

Residues 1–549 (MTDNKNHSLI…EEVSLKPTTE (549 aa)) form an ATP synthase alpha chain region. 170–177 (GDRQTGKT) contributes to the ATP binding site. Residues 550 to 799 (TSEAVQIEEK…KGPSGFTYLK (250 aa)) form a unknown region.

It belongs to the ATPase alpha/beta chains family. In terms of assembly, F-type ATPases have 2 components, CF(1) - the catalytic core - and CF(0) - the membrane proton channel. CF(1) has five subunits: alpha(3), beta(3), gamma(1), delta(1), epsilon(1). CF(0) has three main subunits: a(1), b(2) and c(9-12). The alpha and beta chains form an alternating ring which encloses part of the gamma chain. CF(1) is attached to CF(0) by a central stalk formed by the gamma and epsilon chains, while a peripheral stalk is formed by the delta and b chains.

It localises to the cell membrane. The catalysed reaction is ATP + H2O + 4 H(+)(in) = ADP + phosphate + 5 H(+)(out). Its function is as follows. Produces ATP from ADP in the presence of a proton gradient across the membrane. The alpha chain is a regulatory subunit. The polypeptide is ATP synthase subunit alpha (atpA) (Ureaplasma parvum serovar 3 (strain ATCC 27815 / 27 / NCTC 11736)).